Consider the following 145-residue polypeptide: Actin-depolymerizing factor 2 (145 aa).

The 133-residue stretch at 13 to 145 (GMGVAPDIRD…DLEVLRERAH (133 aa)) folds into the ADF-H domain.

Belongs to the actin-binding proteins ADF family.

Actin-depolymerizing protein. Severs actin filaments (F-actin) and binds to actin monomers. In Oryza sativa subsp. japonica (Rice), this protein is Actin-depolymerizing factor 2 (ADF2).